A 491-amino-acid polypeptide reads, in one-letter code: Keratin, type II microfibrillar, component 7C (491 aa).

Position 1 is a blocked amino end (Cys) (Cys-1). The head stretch occupies residues 1-109 (CGFSTVGSGF…PNAQCVKQEE (109 aa)). Positions 109-420 (EKEQIKCLNN…RLLEGEEQRL (312 aa)) constitute an IF rod domain. The tract at residues 110 to 144 (KEQIKCLNNRFAAFIDKVRFLEQQNKLLETKLQFF) is coil 1A. The segment at 145–154 (QNRQCCESNL) is linker 1. The segment at 155–255 (EPLFEGYIET…YQEEIRVLQA (101 aa)) is coil 1B. The interval 256–272 (NISDTSVIVKMDNSRDL) is linker 12. The interval 273–416 (NMDCIVAEIK…ATYRRLLEGE (144 aa)) is coil 2. A tail region spans residues 417–491 (EQRLCEGVGA…GGGSCSLGRC (75 aa)).

It belongs to the intermediate filament family.

In terms of biological role, wool microfibrillar keratin. In Ovis aries (Sheep), this protein is Keratin, type II microfibrillar, component 7C.